The chain runs to 242 residues: Sugar fermentation stimulation protein homolog (242 aa).

The protein belongs to the SfsA family.

This Enterococcus mundtii protein is Sugar fermentation stimulation protein homolog.